The following is a 141-amino-acid chain: ATP synthase epsilon chain (141 aa).

This sequence belongs to the ATPase epsilon chain family. As to quaternary structure, F-type ATPases have 2 components, CF(1) - the catalytic core - and CF(0) - the membrane proton channel. CF(1) has five subunits: alpha(3), beta(3), gamma(1), delta(1), epsilon(1). CF(0) has three main subunits: a, b and c.

Its subcellular location is the cell inner membrane. In terms of biological role, produces ATP from ADP in the presence of a proton gradient across the membrane. The protein is ATP synthase epsilon chain of Pseudomonas syringae pv. syringae (strain B728a).